We begin with the raw amino-acid sequence, 160 residues long: MRCPNCNSLDTQVKDSRPTEDSSVIRRRRVCIACNFRFTTFERVQLRELIVIKRNGRRVPFDRDKLMRSVQISLRKRPVDPERVEQMVSAIVRELESGGEAEISSETIGESVMDHLRKLDDVAYVRFASVYRNFREAKDFEAVLGELSHEDEARAALVRK.

Positions 1 to 11 are enriched in polar residues; the sequence is MRCPNCNSLDT. The disordered stretch occupies residues 1-20; it reads MRCPNCNSLDTQVKDSRPTE. Residues 3–34 fold into a zinc finger; sequence CPNCNSLDTQVKDSRPTEDSSVIRRRRVCIAC. In terms of domain architecture, ATP-cone spans 49–139; it reads LIVIKRNGRR…VYRNFREAKD (91 aa).

It belongs to the NrdR family. Requires Zn(2+) as cofactor.

Negatively regulates transcription of bacterial ribonucleotide reductase nrd genes and operons by binding to NrdR-boxes. The sequence is that of Transcriptional repressor NrdR from Rhodopseudomonas palustris (strain ATCC BAA-98 / CGA009).